The primary structure comprises 352 residues: NADP-dependent oxidoreductase RED1 (352 aa).

Residues 166 to 169 (GAVG), K192, Y208, N231, and 285 to 287 (FIV) each bind NADP(+).

Belongs to the NADP-dependent oxidoreductase L4BD family.

The protein operates within mycotoxin biosynthesis. In terms of biological role, NADP-dependent oxidoreductase; part of the Tox1B locus, one of the 2 loci that mediate the biosynthesis of T-toxin, a family of linear polyketides 37 to 45 carbons in length, of which the major component is 41 carbons, and which leads to high virulence to maize. One of the PKSs (PKS1 or PKS2) could synthesize a precursor, used subsequently by the other PKS as starter unit, to add additional carbons. Variability in the length of the final carbon backbone C35-47 could be achieved by varying the number of condensation cycles, or use of different starter or extender units or might be due to decarboxylation of the penultimate product, catalyzed by DEC1. Additional proteins are required for the biosynthesis of T-toxin, including oxidoreductases RED1, RED2, RED3, LAM1 and OXI1, as well as esterase TOX9. The polypeptide is NADP-dependent oxidoreductase RED1 (Cochliobolus heterostrophus (strain C4 / ATCC 48331 / race T) (Southern corn leaf blight fungus)).